We begin with the raw amino-acid sequence, 1088 residues long: Ran-binding protein 17 (1088 aa).

Ala2 bears the N-acetylalanine mark. A Phosphoserine modification is found at Ser569.

The protein belongs to the exportin family. As to quaternary structure, binds to nucleoporins and the GTP-bound form of Ran. Highly expressed in testis, moderately in pancreas and weakly in other tissues studied.

Its subcellular location is the cytoplasm. The protein localises to the nucleus. It is found in the nuclear pore complex. Functionally, may function as a nuclear transport receptor. This is Ran-binding protein 17 (RANBP17) from Homo sapiens (Human).